A 317-amino-acid chain; its full sequence is Vacuolar arginine/histidine antiporter YPQ2 (317 aa).

Residues 1–13 (MSCSNGIWPTVSN) are Vacuolar-facing. Positions 8–71 (WPTVSNLCGS…AKLTGQLLFQ (64 aa)) constitute a PQ-loop 1 domain. The chain crosses the membrane as a helical span at residues 14 to 34 (LCGSLSFFTSVISLFPQIIET). Residues 35-39 (YRDKS) lie on the Cytoplasmic side of the membrane. A helical transmembrane segment spans residues 40 to 62 (VDGLSPYFLLAWLCGDITSLIGA). At 63–71 (KLTGQLLFQ) the chain is on the vacuolar side. The chain crosses the membrane as a helical span at residues 72-94 (ILLAIYFLLNDSFVCGQYYYYGV). Residues 95 to 143 (LHENKLATVGHEPKPLLPELVENGELLREEEDMIQGGSSAESPRSSRRR) lie on the Cytoplasmic side of the membrane. Phosphoserine is present on Ser136. A helical transmembrane segment spans residues 144 to 164 (SAITAALAIAHTISTASAYPL). Over 165–184 (NVGSTQSQVGPPGDGKNSQL) the chain is Vacuolar. The chain crosses the membrane as a helical span at residues 185 to 205 (GTILSWIGASFYVGARIPQLI). One can recognise a PQ-loop 2 domain in the interval 185–247 (GTILSWIGAS…SCRFLDNQNK (63 aa)). Residues 206–215 (KNYNRKSTDG) lie on the Cytoplasmic side of the membrane. Residues 216–236 (LSPFLFATTLLCNITYNLSIF) form a helical membrane-spanning segment. Residues 237 to 249 (TSCRFLDNQNKRE) are Vacuolar-facing. The helical transmembrane segment at 250–270 (FIVNELPFIFGSAGTIAFDLI) threads the bilayer. At 271–317 (YFYQYYILYATDMQLRELERELYSPEEDSAAQLVTERTSLLSGETQT) the chain is on the cytoplasmic side.

The protein belongs to the laat-1 family.

The protein localises to the vacuole membrane. It catalyses the reaction L-histidine(out) + L-arginine(in) = L-histidine(in) + L-arginine(out). In terms of biological role, amino acid transporter that moves arginine across the vacuolar membrane. Active during nitrogen starvation when it exports stored vacuolar arginine to the cytosol, for use as a nitrogen source. Has been shown to function as an arginine/histidine antiporter when substrate is present on both sides of the membrane, but may also function as a uniporter. This Saccharomyces cerevisiae (strain ATCC 204508 / S288c) (Baker's yeast) protein is Vacuolar arginine/histidine antiporter YPQ2 (YPQ2).